Here is a 104-residue protein sequence, read N- to C-terminus: Large ribosomal subunit protein uL24 (104 aa).

This sequence belongs to the universal ribosomal protein uL24 family. Part of the 50S ribosomal subunit.

Functionally, one of two assembly initiator proteins, it binds directly to the 5'-end of the 23S rRNA, where it nucleates assembly of the 50S subunit. In terms of biological role, one of the proteins that surrounds the polypeptide exit tunnel on the outside of the subunit. In Caulobacter sp. (strain K31), this protein is Large ribosomal subunit protein uL24.